Consider the following 2587-residue polypeptide: Fap1 adhesin (2587 aa).

Residues 1-85 (MGKYKRAGET…ATVVSGNVFA (85 aa)) form the signal peptide. 4 disordered regions span residues 107 to 158 (SSEN…SESV), 173 to 212 (SISESVSESTSTSIVLSESGAASGNKATSKGTEEKQDSVR), 515 to 539 (DSIPSDTTSQSESTSKSESTSKSIS), and 568 to 2558 (ESIT…GENV). Residues 107–195 (SSENFDSEKA…IVLSESGAAS (89 aa)) are ser-rich region 1, SRR1. Composition is skewed to low complexity over residues 121–158 (SLSQSESASESVSESISESVSESVSTSESVSESVSESV) and 173–191 (SISESVSESTSTSIVLSES). The sufficient to block adherence to beads stretch occupies residues 191–522 (SGAASGNKAT…NADSIPSDTT (332 aa)). Residues 192-202 (GAASGNKATSK) show a composition bias toward polar residues. Residues 203–212 (GTEEKQDSVR) show a composition bias toward basic and acidic residues. The segment at 516–2561 (SIPSDTTSQS…PNTGENVSSS (2046 aa)) is ser-rich region 2, SRR2. 2 stretches are compositionally biased toward low complexity: residues 519–539 (SDTTSQSESTSKSESTSKSIS) and 568–2545 (ESIT…VSES). A required for localization to cell wall, fimbriae formation and adherence to saliva-coated hydroxyapatite beads (SHA) but not secretion region spans residues 2367–2587 (SESISESVSE…RKKRKSEDAE (221 aa)). The short motif at 2551 to 2555 (LPNTG) is the LPXTG sorting signal element. T2554 bears the Pentaglycyl murein peptidoglycan amidated threonine mark. Positions 2555–2587 (GENVSSSLGLVGLSGLLFGALLGRKKRKSEDAE) are cleaved as a propeptide — removed by sortase.

Belongs to the serine-rich repeat protein (SRRP) family. Glycosylated; occurs within the cytoplasm. It is probable that most of the Ser residues in SSR1 and SSR2 are O-GlcNAcylated. Sequential glycosylation by sugar transferases are able to generate complex sugar polymorphisms.

Its subcellular location is the cytoplasm. The protein localises to the secreted. It localises to the cell wall. It is found in the fimbrium. Its function is as follows. The major structural element of fimbriae. Required for adherence to saliva-coated hydroxyapatite beads (SHA), an in vitro tooth model. A Fap1-dependent increase in adherence is seen as the pH is reduced from pH 8 to pH 5. The polypeptide is Fap1 adhesin (fap1) (Streptococcus parasanguinis).